Consider the following 379-residue polypeptide: Queuine tRNA-ribosyltransferase (379 aa).

Asp93 functions as the Proton acceptor in the catalytic mechanism. Substrate is bound by residues 93 to 97 (DSGGF), Asp147, Gln191, and Gly218. The RNA binding stretch occupies residues 249–255 (GVGKPED). Asp268 serves as the catalytic Nucleophile. The tract at residues 273–277 (TRNAR) is RNA binding; important for wobble base 34 recognition. Zn(2+) contacts are provided by Cys306, Cys308, Cys311, and His337.

It belongs to the queuine tRNA-ribosyltransferase family. In terms of assembly, homodimer. Within each dimer, one monomer is responsible for RNA recognition and catalysis, while the other monomer binds to the replacement base PreQ1. It depends on Zn(2+) as a cofactor.

It carries out the reaction 7-aminomethyl-7-carbaguanine + guanosine(34) in tRNA = 7-aminomethyl-7-carbaguanosine(34) in tRNA + guanine. Its pathway is tRNA modification; tRNA-queuosine biosynthesis. Catalyzes the base-exchange of a guanine (G) residue with the queuine precursor 7-aminomethyl-7-deazaguanine (PreQ1) at position 34 (anticodon wobble position) in tRNAs with GU(N) anticodons (tRNA-Asp, -Asn, -His and -Tyr). Catalysis occurs through a double-displacement mechanism. The nucleophile active site attacks the C1' of nucleotide 34 to detach the guanine base from the RNA, forming a covalent enzyme-RNA intermediate. The proton acceptor active site deprotonates the incoming PreQ1, allowing a nucleophilic attack on the C1' of the ribose to form the product. After dissociation, two additional enzymatic reactions on the tRNA convert PreQ1 to queuine (Q), resulting in the hypermodified nucleoside queuosine (7-(((4,5-cis-dihydroxy-2-cyclopenten-1-yl)amino)methyl)-7-deazaguanosine). The chain is Queuine tRNA-ribosyltransferase from Mannheimia succiniciproducens (strain KCTC 0769BP / MBEL55E).